A 603-amino-acid polypeptide reads, in one-letter code: Autophagy-related protein 13a (603 aa).

Phosphoserine is present on serine 248. Disordered stretches follow at residues 258 to 477 (PSPG…DDLD) and 498 to 518 (SHSLDRRKTSSSISQSLPLGR). The segment covering 301–315 (ATPNQSFSPAQSHQL) has biased composition (polar residues). The segment covering 320–331 (HDFHWSRTDAFG) has biased composition (basic and acidic residues). Composition is skewed to polar residues over residues 371–386 (IPSSATLNRYVSSNFS) and 419–437 (SSRSGESPSGLMNQYPTQK). Low complexity predominate over residues 453-473 (LSSSDSPRFAFSRSPSRLSSQ).

The protein belongs to the ATG13 family. Plant subfamily. In terms of assembly, interacts with ATG1A. Interacts with ATG11 and ATG101. In terms of processing, phosphorylated during nutrient starvation. Dephosphorylated in nutrient-rich conditions.

It localises to the cytoplasmic vesicle. It is found in the autophagosome. Its function is as follows. Involved in autophagy in a nutritional condition dependent manner. The ATG1-ATG13 protein kinase complex regulates downstream events required for autophagosome enclosure and/or vacuolar delivery. Becomes a target of autophagy under nutrient starvation. Connects autophagy to plant nutritional status. This chain is Autophagy-related protein 13a, found in Arabidopsis thaliana (Mouse-ear cress).